We begin with the raw amino-acid sequence, 156 residues long: FAD synthase (156 aa).

ATP-binding positions include 9-10 (TF), 14-17 (HPGH), Asn92, and His119.

This sequence belongs to the archaeal FAD synthase family. Homodimer. Requires a divalent metal cation as cofactor.

It catalyses the reaction FMN + ATP + H(+) = FAD + diphosphate. The protein operates within cofactor biosynthesis; FAD biosynthesis; FAD from FMN: step 1/1. In terms of biological role, catalyzes the transfer of the AMP portion of ATP to flavin mononucleotide (FMN) to produce flavin adenine dinucleotide (FAD) coenzyme. This Methanospirillum hungatei JF-1 (strain ATCC 27890 / DSM 864 / NBRC 100397 / JF-1) protein is FAD synthase.